A 566-amino-acid chain; its full sequence is Beta,beta-carotene 15,15'-dioxygenase (566 aa).

The Fe cation site is built by His172, His237, His308, and His514. A disordered region spans residues 529–566; it reads TPAKTQEDENSDHPTGLTAPGLGHGENDFTAGHGGKSL.

This sequence belongs to the carotenoid oxygenase family. Fe(2+) serves as cofactor.

It is found in the cytoplasm. The protein resides in the cytosol. It carries out the reaction all-trans-beta-carotene + O2 = 2 all-trans-retinal. The protein operates within cofactor metabolism; retinol metabolism. Functionally, symmetrically cleaves beta-carotene into two molecules of retinal using a dioxygenase mechanism. The polypeptide is Beta,beta-carotene 15,15'-dioxygenase (Rattus norvegicus (Rat)).